We begin with the raw amino-acid sequence, 350 residues long: Serine-threonine kinase receptor-associated protein (350 aa).

7 WD repeats span residues 12 to 56, 57 to 96, 98 to 137, 141 to 179, 180 to 212, 221 to 262, and 263 to 302; these read GHTR…GTFL, GHKG…ELMT, AHKH…AEPK, GHTS…EVKS, LNFN…HSAV, EAPA…ESYK, and GHFG…TYGL. Ser312, Ser335, and Ser338 each carry phosphoserine. A disordered region spans residues 327–350; it reads EEELEEIASENSDSIYSSTPEVKA. A compositionally biased stretch (polar residues) spans 337–350; that stretch reads NSDSIYSSTPEVKA. Tyr342 carries the post-translational modification Phosphotyrosine.

Belongs to the WD repeat STRAP family. In terms of assembly, part of the core SMN complex that contains SMN1, GEMIN2/SIP1, DDX20/GEMIN3, GEMIN4, GEMIN5, GEMIN6, GEMIN7, GEMIN8 and STRAP/UNRIP. Part of the SMN-Sm complex that contains SMN1, GEMIN2/SIP1, DDX20/GEMIN3, GEMIN4, GEMIN5, GEMIN6, GEMIN7, GEMIN8, STRAP/UNRIP and the Sm proteins SNRPB, SNRPD1, SNRPD2, SNRPD3, SNRPE, SNRPF and SNRPG. Interacts directly with GEMIN6 and GEMIN7. Associates with the SMN complex in the cytoplasm but not in the nucleus. Also interacts with CSDE1/UNR and MAWBP. Interacts with PDPK1. Interacts with TRIM48.

Its subcellular location is the cytoplasm. The protein resides in the nucleus. Its function is as follows. The SMN complex catalyzes the assembly of small nuclear ribonucleoproteins (snRNPs), the building blocks of the spliceosome, and thereby plays an important role in the splicing of cellular pre-mRNAs. Most spliceosomal snRNPs contain a common set of Sm proteins SNRPB, SNRPD1, SNRPD2, SNRPD3, SNRPE, SNRPF and SNRPG that assemble in a heptameric protein ring on the Sm site of the small nuclear RNA to form the core snRNP (Sm core). In the cytosol, the Sm proteins SNRPD1, SNRPD2, SNRPE, SNRPF and SNRPG are trapped in an inactive 6S pICln-Sm complex by the chaperone CLNS1A that controls the assembly of the core snRNP. To assemble core snRNPs, the SMN complex accepts the trapped 5Sm proteins from CLNS1A forming an intermediate. Binding of snRNA inside 5Sm triggers eviction of the SMN complex, thereby allowing binding of SNRPD3 and SNRPB to complete assembly of the core snRNP. STRAP plays a role in the cellular distribution of the SMN complex. Negatively regulates TGF-beta signaling but positively regulates the PDPK1 kinase activity by enhancing its autophosphorylation and by significantly reducing the association of PDPK1 with 14-3-3 protein. This chain is Serine-threonine kinase receptor-associated protein (STRAP), found in Bos taurus (Bovine).